Reading from the N-terminus, the 437-residue chain is Magnetosome protein MamN (437 aa).

11 helical membrane-spanning segments follow: residues 26–46 (LAVL…GSYT), 53–73 (SVYF…ALLA), 95–115 (WILV…NSLV), 136–156 (VPVI…TMIG), 174–194 (FIAG…VFFE), 226–246 (LLSY…LAGP), 252–268 (GWIA…LGRF), 281–301 (DILF…VGIL), 320–340 (AILL…GTSA), 358–378 (AAWW…LPGA), and 416–436 (WGMP…AVLV).

This sequence belongs to the arsenite-antimonite (ArsB) efflux (TC 2.A.45) family.

It is found in the magnetosome membrane. Functionally, plays a role in biomineralization; might regulate pH in the magnetosome. The polypeptide is Magnetosome protein MamN (mamN) (Paramagnetospirillum magneticum (strain ATCC 700264 / AMB-1) (Magnetospirillum magneticum)).